A 351-amino-acid polypeptide reads, in one-letter code: Cell cycle control protein 50B (351 aa).

The Cytoplasmic portion of the chain corresponds to 1–33 (MTWSATARGAHQPDNTAFTQQRLPAWQPLLSAS). A helical membrane pass occupies residues 34 to 54 (IALPLFFCAGLAFIGLGLGLY). Topologically, residues 55-315 (YSSNGIKELE…SISWMGGKNP (261 aa)) are exoplasmic loop. Asn75, Asn213, and Asn286 each carry an N-linked (GlcNAc...) asparagine glycan. Residues 316–336 (FLGIAYLVVGSLCILTGFVML) traverse the membrane as a helical segment. Residues 337–351 (VVYIRYQDQDDDDEE) are Cytoplasmic-facing.

It belongs to the CDC50/LEM3 family. In terms of assembly, component of a P4-ATPase flippase complex which consists of a catalytic alpha subunit and an accessory beta subunit. Interacts with alpha subunits ATP8A1, ATP8B1, ATP8B2 and ATP8B4.

It localises to the cell membrane. Functionally, accessory component of a P4-ATPase flippase complex which catalyzes the hydrolysis of ATP coupled to the transport of aminophospholipids from the outer to the inner leaflet of various membranes and ensures the maintenance of asymmetric distribution of phospholipids. Phospholipid translocation also seems to be implicated in vesicle formation and in uptake of lipid signaling molecules. The beta subunit may assist in binding of the phospholipid substrate. Can mediate the export of alpha subunits ATP8A1, ATP8B1, ATP8B2 and ATP8B4 from the ER to the plasma membrane. This is Cell cycle control protein 50B (TMEM30B) from Homo sapiens (Human).